The chain runs to 238 residues: Proteasome subunit beta type-6 (238 aa).

An N-acetylalanine modification is found at A2. A propeptide spans A2 to G33 (removed in mature form). The active-site Nucleophile is the T34. T68 carries the phosphothreonine modification.

Belongs to the peptidase T1B family. In terms of assembly, the 26S proteasome consists of a 20S proteasome core and two 19S regulatory subunits. The 20S proteasome core is a barrel-shaped complex made of 28 subunits that are arranged in four stacked rings. The two outer rings are each formed by seven alpha subunits, and the two inner rings are formed by seven beta subunits. The proteolytic activity is exerted by three beta-subunits PSMB5, PSMB6 and PSMB7.

It is found in the cytoplasm. The protein localises to the nucleus. The catalysed reaction is Cleavage of peptide bonds with very broad specificity.. Its function is as follows. Component of the 20S core proteasome complex involved in the proteolytic degradation of most intracellular proteins. This complex plays numerous essential roles within the cell by associating with different regulatory particles. Associated with two 19S regulatory particles, forms the 26S proteasome and thus participates in the ATP-dependent degradation of ubiquitinated proteins. The 26S proteasome plays a key role in the maintenance of protein homeostasis by removing misfolded or damaged proteins that could impair cellular functions, and by removing proteins whose functions are no longer required. Associated with the PA200 or PA28, the 20S proteasome mediates ubiquitin-independent protein degradation. This type of proteolysis is required in several pathways including spermatogenesis (20S-PA200 complex) or generation of a subset of MHC class I-presented antigenic peptides (20S-PA28 complex). Within the 20S core complex, PSMB6 displays a peptidylglutamyl-hydrolyzing activity also termed postacidic or caspase-like activity, meaning that the peptides bond hydrolysis occurs directly after acidic residues. This Rattus norvegicus (Rat) protein is Proteasome subunit beta type-6 (Psmb6).